Reading from the N-terminus, the 172-residue chain is Protein-export protein SecB (172 aa).

Residues 152-172 (AQGAEGGNSGIVMPDGSQARH) form a disordered region.

It belongs to the SecB family. As to quaternary structure, homotetramer, a dimer of dimers. One homotetramer interacts with 1 SecA dimer.

Its subcellular location is the cytoplasm. In terms of biological role, one of the proteins required for the normal export of preproteins out of the cell cytoplasm. It is a molecular chaperone that binds to a subset of precursor proteins, maintaining them in a translocation-competent state. It also specifically binds to its receptor SecA. The protein is Protein-export protein SecB of Cupriavidus taiwanensis (strain DSM 17343 / BCRC 17206 / CCUG 44338 / CIP 107171 / LMG 19424 / R1) (Ralstonia taiwanensis (strain LMG 19424)).